The chain runs to 156 residues: Arginine repressor (156 aa).

It belongs to the ArgR family.

It localises to the cytoplasm. It functions in the pathway amino-acid biosynthesis; L-arginine biosynthesis [regulation]. In terms of biological role, regulates arginine biosynthesis genes. The chain is Arginine repressor from Shewanella oneidensis (strain ATCC 700550 / JCM 31522 / CIP 106686 / LMG 19005 / NCIMB 14063 / MR-1).